Consider the following 104-residue polypeptide: Pyrimidine/purine nucleoside phosphorylase (104 aa).

The protein belongs to the nucleoside phosphorylase PpnP family.

It catalyses the reaction a purine D-ribonucleoside + phosphate = a purine nucleobase + alpha-D-ribose 1-phosphate. It carries out the reaction adenosine + phosphate = alpha-D-ribose 1-phosphate + adenine. The catalysed reaction is cytidine + phosphate = cytosine + alpha-D-ribose 1-phosphate. The enzyme catalyses guanosine + phosphate = alpha-D-ribose 1-phosphate + guanine. It catalyses the reaction inosine + phosphate = alpha-D-ribose 1-phosphate + hypoxanthine. It carries out the reaction thymidine + phosphate = 2-deoxy-alpha-D-ribose 1-phosphate + thymine. The catalysed reaction is uridine + phosphate = alpha-D-ribose 1-phosphate + uracil. The enzyme catalyses xanthosine + phosphate = alpha-D-ribose 1-phosphate + xanthine. Its function is as follows. Catalyzes the phosphorolysis of diverse nucleosides, yielding D-ribose 1-phosphate and the respective free bases. Can use uridine, adenosine, guanosine, cytidine, thymidine, inosine and xanthosine as substrates. Also catalyzes the reverse reactions. The sequence is that of Pyrimidine/purine nucleoside phosphorylase from Syntrophotalea carbinolica (strain DSM 2380 / NBRC 103641 / GraBd1) (Pelobacter carbinolicus).